The following is a 261-amino-acid chain: Sepiapterin reductase (261 aa).

NADP(+) is bound by residues 16–22 (GASRGFG), 44–45 (RT), and 71–72 (DL). Substrate contacts are provided by residues 158–159 (SL) and Y171. An NADP(+)-binding site is contributed by K175. G200 contacts substrate. 202–207 (LDTDMH) contacts NADP(+). D258 serves as a coordination point for substrate.

It belongs to the sepiapterin reductase family. Homodimer.

The protein resides in the cytoplasm. It catalyses the reaction L-erythro-7,8-dihydrobiopterin + NADP(+) = L-sepiapterin + NADPH + H(+). The catalysed reaction is (6R)-L-erythro-5,6,7,8-tetrahydrobiopterin + 2 NADP(+) = 6-pyruvoyl-5,6,7,8-tetrahydropterin + 2 NADPH + 2 H(+). Functionally, catalyzes the final one or two reductions in tetra-hydrobiopterin biosynthesis to form 5,6,7,8-tetrahydrobiopterin. The polypeptide is Sepiapterin reductase (spr) (Xenopus tropicalis (Western clawed frog)).